Reading from the N-terminus, the 647-residue chain is Frizzled-1 (647 aa).

Positions 1 to 69 (MAEEEAPKKS…WLLEAPLLLG (69 aa)) are cleaved as a signal peptide. The Extracellular portion of the chain corresponds to 73 to 322 (QAAGQGPGQG…PEELRFSRTW (250 aa)). The interval 74 to 104 (AAGQGPGQGPGPGQQPPPPPQQQQSGQQYNG) is disordered. An FZ domain is found at 111–230 (PDHGYCQPIS…HGAGELCVGQ (120 aa)). Cystine bridges form between Cys116–Cys177, Cys124–Cys170, Cys161–Cys198, Cys187–Cys227, and Cys191–Cys215. The N-linked (GlcNAc...) asparagine glycan is linked to Asn130. Asn231 is a glycosylation site (N-linked (GlcNAc...) asparagine). The chain crosses the membrane as a helical span at residues 323 to 343 (IGIWSVLCCASTLFTVLTYLV). Topologically, residues 344 to 354 (DMRRFSYPERP) are cytoplasmic. Residues 355–375 (IIFLSGCYTAVAVAYIAGFLL) form a helical membrane-spanning segment. The Extracellular segment spans residues 376 to 402 (EDRVVCNDKFAEDGARTVAQGTKKEGC). Residues 403–423 (TILFMMLYFFSMASSIWWVIL) form a helical membrane-spanning segment. Over 424–445 (SLTWFLAAGMKWGHEAIEANSQ) the chain is Cytoplasmic. The helical transmembrane segment at 446 to 466 (YFHLAAWAVPAIKTITILALG) threads the bilayer. Over 467 to 489 (QVDGDVLSGVCFVGLNNVDALRG) the chain is Extracellular. Residues 490-510 (FVLAPLFVYLFIGTSFLLAGF) form a helical membrane-spanning segment. Residues 511–536 (VSLFRIRTIMKHDGTKTEKLEKLMVR) are Cytoplasmic-facing. Residues 537-557 (IGVFSVLYTVPATIVIACYFY) form a helical membrane-spanning segment. Over 558–601 (EQAFRDQWERSWVAQSCKSYAIPCPHLQAGGGAPPHPPMSPDFT) the chain is Extracellular. The chain crosses the membrane as a helical span at residues 602 to 622 (VFMIKYLMTLIVGITSGFWIW). Topologically, residues 623–647 (SGKTLNSWRKFYTRLTNSKQGETTV) are cytoplasmic. The Lys-Thr-X-X-X-Trp motif, mediates interaction with the PDZ domain of Dvl family members signature appears at 625 to 630 (KTLNSW). The short motif at 645-647 (TTV) is the PDZ-binding element.

It belongs to the G-protein coupled receptor Fz/Smo family. In terms of assembly, interacts with MYOC. Interacts with WNT7B. (Microbial infection) Interacts with C.difficile toxin TcdB; frizzled receptors constitute the major host receptors for TcdB in the colonic epithelium. Post-translationally, ubiquitinated by ZNRF3, leading to its degradation by the proteasome. In terms of tissue distribution, expressed in adult heart, placenta, lung, kidney, pancreas, prostate, and ovary and in fetal lung and kidney.

The protein resides in the cell membrane. Its function is as follows. Receptor for Wnt proteins. Activated by WNT3A, WNT3, WNT1 and to a lesser extent WNT2, but apparently not by WNT4, WNT5A, WNT5B, WNT6, WNT7A or WNT7B. Contradictory results showing activation by WNT7B have been described for mouse. Functions in the canonical Wnt/beta-catenin signaling pathway. The canonical Wnt/beta-catenin signaling pathway leads to the activation of disheveled proteins, inhibition of GSK-3 kinase, nuclear accumulation of beta-catenin and activation of Wnt target genes. A second signaling pathway involving PKC and calcium fluxes has been seen for some family members, but it is not yet clear if it represents a distinct pathway or if it can be integrated in the canonical pathway, as PKC seems to be required for Wnt-mediated inactivation of GSK-3 kinase. Both pathways seem to involve interactions with G-proteins. May be involved in transduction and intercellular transmission of polarity information during tissue morphogenesis and/or in differentiated tissues. In terms of biological role, (Microbial infection) Acts as a receptor for C.difficile toxin TcdB in the colonic epithelium. The protein is Frizzled-1 (FZD1) of Homo sapiens (Human).